Reading from the N-terminus, the 185-residue chain is Large ribosomal subunit protein uL5 (185 aa).

It belongs to the universal ribosomal protein uL5 family. As to quaternary structure, part of the 50S ribosomal subunit; part of the 5S rRNA/L5/L18/L25 subcomplex. Contacts the 5S rRNA and the P site tRNA. Forms a bridge to the 30S subunit in the 70S ribosome.

In terms of biological role, this is one of the proteins that bind and probably mediate the attachment of the 5S RNA into the large ribosomal subunit, where it forms part of the central protuberance. In the 70S ribosome it contacts protein S13 of the 30S subunit (bridge B1b), connecting the 2 subunits; this bridge is implicated in subunit movement. Contacts the P site tRNA; the 5S rRNA and some of its associated proteins might help stabilize positioning of ribosome-bound tRNAs. The chain is Large ribosomal subunit protein uL5 from Rhizobium etli (strain ATCC 51251 / DSM 11541 / JCM 21823 / NBRC 15573 / CFN 42).